The sequence spans 361 residues: tRNA-specific 2-thiouridylase MnmA (361 aa).

ATP is bound by residues 8–15 (GMSGGVDS) and M34. Residues 94–96 (NPD) are interaction with target base in tRNA. C99 functions as the Nucleophile in the catalytic mechanism. C99 and C195 are oxidised to a cystine. G123 is a binding site for ATP. Residues 145 to 147 (KDQ) are interaction with tRNA. C195 serves as the catalytic Cysteine persulfide intermediate. The segment at 307–308 (RY) is interaction with tRNA.

This sequence belongs to the MnmA/TRMU family.

Its subcellular location is the cytoplasm. The enzyme catalyses S-sulfanyl-L-cysteinyl-[protein] + uridine(34) in tRNA + AH2 + ATP = 2-thiouridine(34) in tRNA + L-cysteinyl-[protein] + A + AMP + diphosphate + H(+). Catalyzes the 2-thiolation of uridine at the wobble position (U34) of tRNA, leading to the formation of s(2)U34. In Legionella pneumophila (strain Paris), this protein is tRNA-specific 2-thiouridylase MnmA.